The chain runs to 308 residues: Aspartate carbamoyltransferase catalytic subunit (308 aa).

Residues Arg55 and Thr56 each coordinate carbamoyl phosphate. Lys83 provides a ligand contact to L-aspartate. Carbamoyl phosphate-binding residues include Arg105, His133, and Gln136. Residues Arg166 and Arg220 each coordinate L-aspartate. Gly261 and Pro262 together coordinate carbamoyl phosphate.

The protein belongs to the aspartate/ornithine carbamoyltransferase superfamily. ATCase family. In terms of assembly, heterododecamer (2C3:3R2) of six catalytic PyrB chains organized as two trimers (C3), and six regulatory PyrI chains organized as three dimers (R2).

It catalyses the reaction carbamoyl phosphate + L-aspartate = N-carbamoyl-L-aspartate + phosphate + H(+). Its pathway is pyrimidine metabolism; UMP biosynthesis via de novo pathway; (S)-dihydroorotate from bicarbonate: step 2/3. In terms of biological role, catalyzes the condensation of carbamoyl phosphate and aspartate to form carbamoyl aspartate and inorganic phosphate, the committed step in the de novo pyrimidine nucleotide biosynthesis pathway. This chain is Aspartate carbamoyltransferase catalytic subunit, found in Chlorobium phaeobacteroides (strain DSM 266 / SMG 266 / 2430).